The following is a 221-amino-acid chain: Charged multivesicular body protein 3 (221 aa).

The N-myristoyl glycine moiety is linked to residue Gly2. A coiled-coil region spans residues 22–54 (KIRKEMRVIDRQIRDIQREEEKVKRSIKDAAKK). Important for autoinhibitory function stretches follow at residues 59–64 (VCIILA) and 168–169 (IL). The stretch at 144 to 221 (LEDTLEGMDD…MQSRLAALRS (78 aa)) forms a coiled coil. The interval 181 to 221 (PSKVTDLPDPVAIGATAAPEEESEEEEEIEEMQSRLAALRS) is disordered. Residues 199–211 (PEEESEEEEEIEE) show a composition bias toward acidic residues. The MIT-interacting motif motif lies at 200–210 (EEESEEEEEIE). 2 interaction with STAMBP regions span residues 202-206 (ESEEE) and 220-221 (RS).

Belongs to the SNF7 family. In terms of assembly, probable core component of the endosomal sorting required for transport complex III (ESCRT-III). ESCRT-III components are thought to multimerize to form a flat lattice on the perimeter membrane of the endosome. Several assembly forms of ESCRT-III may exist that interact and act sequentially.

Its subcellular location is the cytoplasm. The protein localises to the cytosol. It localises to the membrane. The protein resides in the endosome. It is found in the late endosome membrane. Probable core component of the endosomal sorting required for transport complex III (ESCRT-III) which is involved in multivesicular bodies (MVBs) formation and sorting of endosomal cargo proteins into MVBs. MVBs contain intraluminal vesicles (ILVs) that are generated by invagination and scission from the limiting membrane of the endosome and mostly are delivered to lysosomes enabling degradation of membrane proteins, such as stimulated growth factor receptors, lysosomal enzymes and lipids. Involved in late stages of cytokinesis. Plays a role in endosomal sorting/trafficking of EGF receptor. The sequence is that of Charged multivesicular body protein 3 (chmp3) from Danio rerio (Zebrafish).